A 178-amino-acid chain; its full sequence is ATP-dependent protease subunit HslV (178 aa).

Threonine 7 is a catalytic residue. Na(+) contacts are provided by glycine 162, cysteine 165, and threonine 168.

This sequence belongs to the peptidase T1B family. HslV subfamily. In terms of assembly, a double ring-shaped homohexamer of HslV is capped on each side by a ring-shaped HslU homohexamer. The assembly of the HslU/HslV complex is dependent on binding of ATP.

It localises to the cytoplasm. It catalyses the reaction ATP-dependent cleavage of peptide bonds with broad specificity.. Its activity is regulated as follows. Allosterically activated by HslU binding. In terms of biological role, protease subunit of a proteasome-like degradation complex believed to be a general protein degrading machinery. The polypeptide is ATP-dependent protease subunit HslV (Burkholderia cenocepacia (strain ATCC BAA-245 / DSM 16553 / LMG 16656 / NCTC 13227 / J2315 / CF5610) (Burkholderia cepacia (strain J2315))).